The sequence spans 68 residues: Large ribosomal subunit protein bL35 (68 aa).

The protein belongs to the bacterial ribosomal protein bL35 family.

This Wolbachia pipientis wMel protein is Large ribosomal subunit protein bL35.